The sequence spans 1463 residues: MITSSKKIVSAMLSTSLWIGVASAAYAETTNVEAEGYSTIGGTYQDGNPQPINIYSVNGVQAINFVNRGDFAEYDVSVSTAGEYSIEYLIGTSIASGSAVEISVLVDGNWQSAGSTNVPLGQWDNFQALAANNNISLAQGTNRIKITGAGTHDWQWNLDAFSLTLVTPENPDNPDNPDNPDDGNTGQPGTPFTIEMEAFDATGSDDPRAQGMVIGERGYPEDKHTVVDSNQTTDWVDYNINFPVSGNYRIEMLASGQTSHATAILFVDNVQINEVAVDTGNQAVFLDFELTDSTYISAGAHTIRVQSGSQINEFSWMWFGDALTFTPLDGGSTDGDADNDGVLDSVDTCPNTPAGAQVDANGCEIIVDNDTDNDGVDNSIDQCPNTPAGAQVDANGCEIVAVVDADNDGVEDSLDMCPNTPAGAPVNGQGCADSQLDADNDGVSDDIDQCPSTPAGSVVDGTGCIVVTPPADSDNDGVVDTLDMCPNTAAGLTVDSQGCALSQLDSDNDGVTDDIDQCANTPSGETANATGCSSSQEGGGTDPDTPQPGLLYGELAGAMNVSDTNPNWERTTDLLQTEDSVKGNTTEVYTGFIYDADGHISFYEHIDDSVRLYIDGVLVLSNDSWEASSQTTDLNLTPGTHEIELRIGNADGGSGAVDGIGFGIDVDGGTNFVHPSTLSESIFTSVGEETGNPDLEQEGDIIVELESFVFTSTNGRVGSDSVEGFSPTATGVNWVTNGDYGDYMVTFEEPGTYGAYITISAANDGSYGARVDVDGWPVAWGYFGGTGSWDVSSENLLYGGTFVVEQAGEKVVRVEAIGGSDWQWSGDRVRFTRLGDVTAIPSPIYNPDDHFVAEIQGPQTDVTYLKKPVEIPANKKVLKSDVWYTYPQNRELEGYDNFGATGAFWGHPPEHDFYDDTVIMDWAVDAVYAFQAEGYEYTARGEFDWGYGWFTEYTTNPQPHYVRTLDDRNVRMTFMGYLSHDGYNNNWLSNHSPAFVPFMKSQVDQILKANPDKLMFDTQTNSTRSTDMRDFGGDFSPYAMENFRVWLSKKYSTGELAALGINDINSFDYGDFLRAQGVTHTSWSNAGDTLSGNIPLQEDYIYFNRDVWNQKFAEVLDYIRQQQPDIEIGASTHLFESRGYVFNENLTFLSGELNLGARTTISELPTNILVHLKGAQAVDKTLVYFPYPWEFDELRLQDAPRFGRGWVAQAYAYGGLFSIPANVWVGGEVWTWSPGADNYRDIYLFVRAQADLLDDYTSYSKVGLVHAMYSSMKAGFIDGGNQIQSSTKLLTEGNINFDLLVFGDEGYPVVPRPEDFDKFDHIFFDGDEQYLTAEQQALLDQQGDKVRHIGQRGTVSGIEITVSISGTESNETVSAVSRIHETDAAAPYVVHLVNRPFAGGVTPTLNNVEVAIPQSYFPEVVTGATLHLPDGTSTSLTLSTNADGDVVLPVNNLEVWGILELAH.

An N-terminal signal peptide occupies residues 1-27 (MITSSKKIVSAMLSTSLWIGVASAAYA). Positions 28–684 (ETTNVEAEGY…PSTLSESIFT (657 aa)) are excised as a propeptide. Disordered stretches follow at residues 166–191 (VTPE…PGTP) and 512–549 (TDDI…PQPG). Polar residues predominate over residues 518–536 (CANTPSGETANATGCSSSQ). Residues 534-677 (SSQEGGGTDP…GGTNFVHPST (144 aa)) form the PA14 domain. The 132-residue stretch at 701-832 (IIVELESFVF…QWSGDRVRFT (132 aa)) folds into the CBM6 domain.

The protein belongs to the glycosyl hydrolase 96 family. In terms of assembly, monomer. Ca(2+) serves as cofactor.

It carries out the reaction Endohydrolysis of 1,3-alpha-L-galactosidic linkages in agarose, yielding agarotetraose as the major product.. Functionally, alpha-agarase. Hydrolyzes agarose, agarohexaose, neoagarohexaose and porphyran. Hydrolysis of porphyran by this enzyme improves its antioxidant activity. Does not hydrolyze kappa-carrageenan, iota-carrageenen or lambda-carrageenan. This is Alpha-agarase from Thalassotalea agarivorans (Thalassomonas agarivorans).